The following is a 392-amino-acid chain: Heat-inducible transcription repressor HrcA (392 aa).

The protein belongs to the HrcA family.

Negative regulator of class I heat shock genes (grpE-dnaK-dnaJ and groELS operons). Prevents heat-shock induction of these operons. This is Heat-inducible transcription repressor HrcA from Synechococcus sp. (strain JA-3-3Ab) (Cyanobacteria bacterium Yellowstone A-Prime).